The primary structure comprises 200 residues: Holliday junction resolvase RecU (200 aa).

Mg(2+) contacts are provided by T82, D84, E97, and Q116.

Belongs to the RecU family. Mg(2+) is required as a cofactor.

It is found in the cytoplasm. The enzyme catalyses Endonucleolytic cleavage at a junction such as a reciprocal single-stranded crossover between two homologous DNA duplexes (Holliday junction).. Endonuclease that resolves Holliday junction intermediates in genetic recombination. Cleaves mobile four-strand junctions by introducing symmetrical nicks in paired strands. Promotes annealing of linear ssDNA with homologous dsDNA. Required for DNA repair, homologous recombination and chromosome segregation. The chain is Holliday junction resolvase RecU from Streptococcus gordonii (strain Challis / ATCC 35105 / BCRC 15272 / CH1 / DL1 / V288).